Consider the following 175-residue polypeptide: Catabolic 3-dehydroquinase (175 aa).

The active-site Proton acceptor is the Y26. The substrate site is built by N104, H110, and D117. H130 (proton donor) is an active-site residue. Substrate-binding positions include 131–132 (VS) and R141.

The protein belongs to the type-II 3-dehydroquinase family. Homododecamer. Adopts a ring-like structure, composed of an arrangement of two hexameric rings stacked on top of one another.

The catalysed reaction is 3-dehydroquinate = 3-dehydroshikimate + H2O. Its pathway is aromatic compound metabolism; 3,4-dihydroxybenzoate biosynthesis; 3,4-dihydroxybenzoate from 3-dehydroquinate: step 1/2. In terms of biological role, is involved in the catabolism of quinate. Allows the utilization of quinate as carbon source via the beta-ketoadipate pathway. This Sordaria macrospora (strain ATCC MYA-333 / DSM 997 / K(L3346) / K-hell) protein is Catabolic 3-dehydroquinase.